A 309-amino-acid polypeptide reads, in one-letter code: Malate dehydrogenase (309 aa).

NAD(+) contacts are provided by residues Gly-9–Gly-14 and Asp-33. The substrate site is built by Arg-82 and Arg-88. NAD(+)-binding positions include Asn-95 and Val-118–Asn-120. Positions 120 and 151 each coordinate substrate. The active-site Proton acceptor is the His-175.

Belongs to the LDH/MDH superfamily. MDH type 3 family. Homotetramer (active enzyme); homodimer and homotrimer at temperatures lower than 55 degrees Celsius (inactive forms).

It carries out the reaction (S)-malate + NAD(+) = oxaloacetate + NADH + H(+). Its function is as follows. Catalyzes the reversible oxidation of malate to oxaloacetate. The polypeptide is Malate dehydrogenase (Chloroflexus aurantiacus (strain ATCC 29366 / DSM 635 / J-10-fl)).